The sequence spans 451 residues: Phosphoglucosamine mutase (451 aa).

The active-site Phosphoserine intermediate is the Ser101. Positions 101, 240, 242, and 244 each coordinate Mg(2+). A Phosphoserine modification is found at Ser101.

The protein belongs to the phosphohexose mutase family. Mg(2+) is required as a cofactor. Activated by phosphorylation.

It carries out the reaction alpha-D-glucosamine 1-phosphate = D-glucosamine 6-phosphate. Catalyzes the conversion of glucosamine-6-phosphate to glucosamine-1-phosphate. This chain is Phosphoglucosamine mutase, found in Streptococcus pyogenes serotype M2 (strain MGAS10270).